The chain runs to 235 residues: Orotidine 5'-phosphate decarboxylase (235 aa).

Substrate-binding positions include Asp-12, Lys-34, 61-70 (DMKLLDIDNT), Thr-116, Arg-177, Gln-186, and Arg-207. Lys-63 acts as the Proton donor in catalysis.

Belongs to the OMP decarboxylase family. Type 1 subfamily. Homodimer.

It catalyses the reaction orotidine 5'-phosphate + H(+) = UMP + CO2. It functions in the pathway pyrimidine metabolism; UMP biosynthesis via de novo pathway; UMP from orotate: step 2/2. Catalyzes the decarboxylation of orotidine 5'-monophosphate (OMP) to uridine 5'-monophosphate (UMP). This chain is Orotidine 5'-phosphate decarboxylase, found in Rhizobium etli (strain CIAT 652).